Reading from the N-terminus, the 91-residue chain is Non-specific lipid-transfer protein 1 (91 aa).

4 disulfides stabilise this stretch: C3–C50, C13–C27, C28–C73, and C48–C87.

This sequence belongs to the plant LTP family.

In terms of biological role, plant non-specific lipid-transfer proteins transfer phospholipids as well as galactolipids across membranes. May play a role in wax or cutin deposition in the cell walls of expanding epidermal cells and certain secretory tissues. The polypeptide is Non-specific lipid-transfer protein 1 (Prunus armeniaca (Apricot)).